A 396-amino-acid chain; its full sequence is 8-amino-7-oxononanoate synthase (396 aa).

Arginine 19 lines the substrate pocket. 106–107 contacts pyridoxal 5'-phosphate; that stretch reads GY. Substrate is bound at residue histidine 131. Positions 176, 204, and 233 each coordinate pyridoxal 5'-phosphate. Lysine 236 is modified (N6-(pyridoxal phosphate)lysine). Threonine 350 is a substrate binding site.

This sequence belongs to the class-II pyridoxal-phosphate-dependent aminotransferase family. BioF subfamily. Homodimer. The cofactor is pyridoxal 5'-phosphate.

It carries out the reaction 6-carboxyhexanoyl-[ACP] + L-alanine + H(+) = (8S)-8-amino-7-oxononanoate + holo-[ACP] + CO2. Its pathway is cofactor biosynthesis; biotin biosynthesis. Catalyzes the decarboxylative condensation of pimeloyl-[acyl-carrier protein] and L-alanine to produce 8-amino-7-oxononanoate (AON), [acyl-carrier protein], and carbon dioxide. The sequence is that of 8-amino-7-oxononanoate synthase from Pseudomonas savastanoi pv. phaseolicola (strain 1448A / Race 6) (Pseudomonas syringae pv. phaseolicola (strain 1448A / Race 6)).